The sequence spans 101 residues: Large ribosomal subunit protein eL43 (101 aa).

Residues 40 to 62 (CPSCRSLVRLKRLAFGIWQCPKC) form a C4-type zinc finger.

This sequence belongs to the eukaryotic ribosomal protein eL43 family. The cofactor is Zn(2+).

This Pyrobaculum islandicum (strain DSM 4184 / JCM 9189 / GEO3) protein is Large ribosomal subunit protein eL43.